The following is a 180-amino-acid chain: ADP-ribosylation factor 4 (180 aa).

Glycine 2 carries N-myristoyl glycine lipidation. GTP contacts are provided by residues 24-31 (GLDAAGKT), 67-71 (DVGGQ), and 126-129 (NKQD).

The protein belongs to the small GTPase superfamily. Arf family.

Its subcellular location is the golgi apparatus. Functionally, GTP-binding protein involved in protein trafficking; may modulate vesicle budding and uncoating within the Golgi apparatus. May be involved in ciliogenesis. The chain is ADP-ribosylation factor 4 (arf4) from Xenopus laevis (African clawed frog).